A 422-amino-acid chain; its full sequence is Transcription termination factor Rho (422 aa).

The Rho RNA-BD domain maps to 52–127 (EVGGDGVLEV…TRVTKINFDD (76 aa)). ATP is bound by residues 173–178 (GKGQRG), 185–190 (RTGKTV), and Arg-216.

The protein belongs to the Rho family. As to quaternary structure, homohexamer. The homohexamer assembles into an open ring structure.

Functionally, facilitates transcription termination by a mechanism that involves Rho binding to the nascent RNA, activation of Rho's RNA-dependent ATPase activity, and release of the mRNA from the DNA template. This chain is Transcription termination factor Rho, found in Cereibacter sphaeroides (strain ATCC 17023 / DSM 158 / JCM 6121 / CCUG 31486 / LMG 2827 / NBRC 12203 / NCIMB 8253 / ATH 2.4.1.) (Rhodobacter sphaeroides).